The chain runs to 239 residues: Ribosomal RNA small subunit methyltransferase G (239 aa).

Residues G78, F83, A129 to E130, and R148 contribute to the S-adenosyl-L-methionine site.

Belongs to the methyltransferase superfamily. RNA methyltransferase RsmG family.

Its subcellular location is the cytoplasm. Functionally, specifically methylates the N7 position of a guanine in 16S rRNA. This is Ribosomal RNA small subunit methyltransferase G from Alkaliphilus oremlandii (strain OhILAs) (Clostridium oremlandii (strain OhILAs)).